The chain runs to 408 residues: LL-diaminopimelate aminotransferase (408 aa).

Substrate-binding residues include Tyr15 and Gly42. Residues Tyr72, 108–109 (SK), Tyr132, Asn187, Tyr218, and 246–248 (SFS) contribute to the pyridoxal 5'-phosphate site. Substrate contacts are provided by Lys109, Tyr132, and Asn187. An N6-(pyridoxal phosphate)lysine modification is found at Lys249. 2 residues coordinate pyridoxal 5'-phosphate: Arg257 and Asn291. Substrate-binding residues include Asn291 and Arg387.

It belongs to the class-I pyridoxal-phosphate-dependent aminotransferase family. LL-diaminopimelate aminotransferase subfamily. In terms of assembly, homodimer. Pyridoxal 5'-phosphate serves as cofactor.

The enzyme catalyses (2S,6S)-2,6-diaminopimelate + 2-oxoglutarate = (S)-2,3,4,5-tetrahydrodipicolinate + L-glutamate + H2O + H(+). The protein operates within amino-acid biosynthesis; L-lysine biosynthesis via DAP pathway; LL-2,6-diaminopimelate from (S)-tetrahydrodipicolinate (aminotransferase route): step 1/1. Involved in the synthesis of meso-diaminopimelate (m-DAP or DL-DAP), required for both lysine and peptidoglycan biosynthesis. Catalyzes the direct conversion of tetrahydrodipicolinate to LL-diaminopimelate. The polypeptide is LL-diaminopimelate aminotransferase (Prochlorococcus marinus (strain NATL1A)).